A 207-amino-acid polypeptide reads, in one-letter code: Serotype 2 fimbrial subunit (207 aa).

The signal sequence occupies residues 1–26; the sequence is MQIPFQRALRLCLRAALAAIASAAHA. A disulfide bridge connects residues Cys42 and Cys85.

Belongs to the fimbrial protein family.

The protein resides in the fimbrium. In terms of biological role, bordetella pertussis is the causative agent of whooping cough. An essential step in the disease process is the attachment of the bacteria to the ciliated epithelium of the respiratory tract, enabling the organism to resist normal host-clearance mechanisms. It is unclear which bacterial cell surface component are responsible for adherence but the fimbriae of B.pertussis are prime candidates for being involved in this process. This Bordetella pertussis (strain Tohama I / ATCC BAA-589 / NCTC 13251) protein is Serotype 2 fimbrial subunit (fim2).